Reading from the N-terminus, the 214-residue chain is Nucleoside triphosphate pyrophosphatase (214 aa).

Residue D79 is the Proton acceptor of the active site.

It belongs to the Maf family. A divalent metal cation serves as cofactor.

It is found in the cytoplasm. It carries out the reaction a ribonucleoside 5'-triphosphate + H2O = a ribonucleoside 5'-phosphate + diphosphate + H(+). The catalysed reaction is a 2'-deoxyribonucleoside 5'-triphosphate + H2O = a 2'-deoxyribonucleoside 5'-phosphate + diphosphate + H(+). Nucleoside triphosphate pyrophosphatase. May have a dual role in cell division arrest and in preventing the incorporation of modified nucleotides into cellular nucleic acids. This Rhodococcus opacus (strain B4) protein is Nucleoside triphosphate pyrophosphatase.